The sequence spans 213 residues: MASNQNQGSYHAGETKARTEEKTGQMMGATKQKAGQTTEATKQKAGETAEATKQKTGETAEAAKQKAAEAKDKTAQTAQAAKDKTYETAQAAKERAAQGKDQTGSALGEKTEAAKQKAAETTEAAKQKAAEATEAAKQKASDTAQYTKESAVAGKDKTGSVLQQAGETVVNAVVGAKDAVANTLGMGGDNTSATKDATTGATVKDTTTTTRNH.

Disordered regions lie at residues 1–158 (MASN…KDKT) and 182–213 (NTLGMGGDNTSATKDATTGATVKDTTTTTRNH). Over residues 13–23 (GETKARTEEKT) the composition is skewed to basic and acidic residues. LEA 11-mer repeat repeat units lie at residues 27-37 (MGATKQKAGQT), 38-48 (TEATKQKAGET), 49-59 (AEATKQKTGET), 60-70 (AEAAKQKAAEA), 78-88 (AQAAKDKTYET), 89-99 (AQAAKERAAQG), 111-121 (TEAAKQKAAET), 122-132 (TEAAKQKAAEA), and 133-143 (TEAAKQKASDT). The 11 X 11 AA tandem repeats of T-E-A-A-K-Q-K-A-A-E-T stretch occupies residues 27 to 143 (MGATKQKAGQ…EAAKQKASDT (117 aa)). Basic and acidic residues-rich tracts occupy residues 41 to 74 (TKQKAGETAEATKQKTGETAEAAKQKAAEAKDKT), 81 to 98 (AKDKTYETAQAAKERAAQ), and 109 to 140 (EKTEAAKQKAAETTEAAKQKAAEATEAAKQKA). The span at 193–213 (ATKDATTGATVKDTTTTTRNH) shows a compositional bias: low complexity.

It belongs to the LEA type 4 family.

This Hordeum vulgare (Barley) protein is ABA-inducible protein PHV A1 (HVA1).